A 133-amino-acid polypeptide reads, in one-letter code: uncharacterized protein (133 aa).

This sequence belongs to the mimivirus L15/L51/R83 family.

This is an uncharacterized protein from Acanthamoeba polyphaga (Amoeba).